The chain runs to 121 residues: Two-component response regulator ORR12 (121 aa).

A Response regulatory domain is found at H5–I121. The residue at position 55 (D55) is a 4-aspartylphosphate.

It belongs to the ARR family. Type-A subfamily. In terms of processing, two-component system major event consists of a His-to-Asp phosphorelay between a sensor histidine kinase (HK) and a response regulator (RR). In plants, the His-to-Asp phosphorelay involves an additional intermediate named Histidine-containing phosphotransfer protein (HPt). This multistep phosphorelay consists of a His-Asp-His-Asp sequential transfer of a phosphate group between first a His and an Asp of the HK protein, followed by the transfer to a conserved His of the HPt protein and finally the transfer to an Asp in the receiver domain of the RR protein. As to expression, expressed in flowers and panicles.

Functionally, functions as a response regulator involved in His-to-Asp phosphorelay signal transduction system. Phosphorylation of the Asp residue in the receiver domain activates the ability of the protein to promote the transcription of target genes. Type-A response regulators seem to act as negative regulators of the cytokinin signaling. The chain is Two-component response regulator ORR12 from Oryza sativa subsp. japonica (Rice).